The following is a 290-amino-acid chain: Small ribosomal subunit biogenesis GTPase RsgA (290 aa).

One can recognise a CP-type G domain in the interval 63-220; sequence KNELIRPPIA…IADTPGFSNL (158 aa). Residues 112 to 115 and 162 to 170 each bind GTP; these read NKFD and GPSGVGKST. Cysteine 244, cysteine 249, histidine 251, and cysteine 257 together coordinate Zn(2+).

It belongs to the TRAFAC class YlqF/YawG GTPase family. RsgA subfamily. As to quaternary structure, monomer. Associates with 30S ribosomal subunit, binds 16S rRNA. Requires Zn(2+) as cofactor.

Its subcellular location is the cytoplasm. Functionally, one of several proteins that assist in the late maturation steps of the functional core of the 30S ribosomal subunit. Helps release RbfA from mature subunits. May play a role in the assembly of ribosomal proteins into the subunit. Circularly permuted GTPase that catalyzes slow GTP hydrolysis, GTPase activity is stimulated by the 30S ribosomal subunit. This is Small ribosomal subunit biogenesis GTPase RsgA from Carboxydothermus hydrogenoformans (strain ATCC BAA-161 / DSM 6008 / Z-2901).